The primary structure comprises 413 residues: Protein arginine N-methyltransferase 2 (413 aa).

2 disordered regions span residues 65-85 and 148-178; these read DDEEPNGVQTNGEQGDEQKSV and ELEDDDEEEEEGQEEQTGTEEVEVEGESAPQ. Positions 148-173 are enriched in acidic residues; sequence ELEDDDEEEEEGQEEQTGTEEVEVEG. One can recognise an RMT2 domain in the interval 192-413; that stretch reads TGPDVTNSRY…YRLPLCKYMD (222 aa). S-adenosyl-L-methionine is bound by residues Tyr201, Met230, 250-255, 271-273, 298-299, and Asp318; these read HGMGIV, EAH, and WQ.

This sequence belongs to the class I-like SAM-binding methyltransferase superfamily. RMT2 methyltransferase family. Monomer.

The protein resides in the cytoplasm. The protein localises to the nucleus. Its function is as follows. S-adenosyl-L-methionine-dependent protein-arginine N-methyltransferase that methylates the delta-nitrogen atom of arginine residues to form N5-methylarginine (type IV) in target proteins. Monomethylates ribosomal protein L12. This chain is Protein arginine N-methyltransferase 2, found in Aspergillus oryzae (strain ATCC 42149 / RIB 40) (Yellow koji mold).